The following is a 233-amino-acid chain: Orotidine 5'-phosphate decarboxylase (233 aa).

Substrate contacts are provided by residues aspartate 13, lysine 35, 62–71 (DLKFHDIPNT), threonine 122, arginine 182, glutamine 191, glycine 211, and arginine 212. Lysine 64 acts as the Proton donor in catalysis.

This sequence belongs to the OMP decarboxylase family. Type 1 subfamily. Homodimer.

The catalysed reaction is orotidine 5'-phosphate + H(+) = UMP + CO2. The protein operates within pyrimidine metabolism; UMP biosynthesis via de novo pathway; UMP from orotate: step 2/2. In terms of biological role, catalyzes the decarboxylation of orotidine 5'-monophosphate (OMP) to uridine 5'-monophosphate (UMP). The protein is Orotidine 5'-phosphate decarboxylase of Pseudomonas putida (strain ATCC 700007 / DSM 6899 / JCM 31910 / BCRC 17059 / LMG 24140 / F1).